A 466-amino-acid polypeptide reads, in one-letter code: UPF0652 protein C16A11.03c (466 aa).

The protein belongs to the UPF0652 family.

The protein localises to the cytoplasm. Its subcellular location is the nucleus. The polypeptide is UPF0652 protein C16A11.03c (Schizosaccharomyces pombe (strain 972 / ATCC 24843) (Fission yeast)).